Reading from the N-terminus, the 130-residue chain is Small ribosomal subunit protein uS9 (130 aa).

A disordered region spans residues 105–130; that stretch reads TRDPRMKERKKYGLKGARRAPQFSKR. A compositionally biased stretch (basic residues) spans 111 to 130; it reads KERKKYGLKGARRAPQFSKR.

The protein belongs to the universal ribosomal protein uS9 family.

This Bacillus pumilus (strain SAFR-032) protein is Small ribosomal subunit protein uS9.